The sequence spans 119 residues: UPF0102 protein MS1289 (119 aa).

It belongs to the UPF0102 family.

The polypeptide is UPF0102 protein MS1289 (Mannheimia succiniciproducens (strain KCTC 0769BP / MBEL55E)).